A 348-amino-acid chain; its full sequence is Dihydroorotase (348 aa).

Positions 17 and 19 each coordinate Zn(2+). Substrate is bound by residues 19–21 (HLR) and Asn-45. Residues Lys-103, His-140, and His-178 each contribute to the Zn(2+) site. N6-carboxylysine is present on Lys-103. His-140 is a binding site for substrate. Leu-223 is a binding site for substrate. Residue Asp-251 coordinates Zn(2+). The active site involves Asp-251. Substrate is bound by residues His-255 and Ala-267.

It belongs to the metallo-dependent hydrolases superfamily. DHOase family. Class II DHOase subfamily. As to quaternary structure, homodimer. It depends on Zn(2+) as a cofactor.

It catalyses the reaction (S)-dihydroorotate + H2O = N-carbamoyl-L-aspartate + H(+). It functions in the pathway pyrimidine metabolism; UMP biosynthesis via de novo pathway; (S)-dihydroorotate from bicarbonate: step 3/3. Its function is as follows. Catalyzes the reversible cyclization of carbamoyl aspartate to dihydroorotate. The chain is Dihydroorotase from Salmonella paratyphi C (strain RKS4594).